We begin with the raw amino-acid sequence, 263 residues long: Small ribosomal subunit protein eS4 (263 aa).

In terms of domain architecture, S4 RNA-binding spans 42–104; the sequence is LPLIIFLRNR…TGENFRLIYD (63 aa).

It belongs to the eukaryotic ribosomal protein eS4 family.

The chain is Small ribosomal subunit protein eS4 (rps4) from Ictalurus punctatus (Channel catfish).